A 313-amino-acid polypeptide reads, in one-letter code: uncharacterized protein (313 aa).

One can recognise an HTH deoR-type domain in the interval 2-57 (KLERLLAMVVLLISKKQVQAAELAELFEVSVRTIYRDIETINRAGIPIVTSQGSGG). Residues 19-38 (VQAAELAELFEVSVRTIYRD) constitute a DNA-binding region (H-T-H motif). Residues 131–210 (HTEDQKTLRE…KDLAILHQTF (80 aa)) enclose the WYL domain.

The protein localises to the cytoplasm. This is an uncharacterized protein from Bacillus subtilis (strain 168).